The chain runs to 965 residues: Phosphatidylethanolamine N-methyltransferase (965 aa).

The Lumenal segment spans residues 1 to 82; it reads MDRGLSTGTN…SPSEPKNLSD (82 aa). The interval 34 to 54 is disordered; it reads PTVTNASNGKDKAGKTFGRTP. Residues 83 to 103 traverse the membrane as a helical segment; that stretch reads LVVLTILAGHIFLLWILPSGA. At 104-106 the chain is on the cytoplasmic side; that stretch reads KIP. The helical transmembrane segment at 107 to 127 threads the bilayer; it reads VFAVIYLFWRSCYNAGIGWLL. At 128–192 the chain is on the lumenal side; it reads HNQSHHKTLV…EYNTWLVFRR (65 aa). A helical transmembrane segment spans residues 193–213; sequence LVDLILMCDFASYCLFAIACS. Over 214 to 220 the chain is Cytoplasmic; sequence RHPANES. A helical membrane pass occupies residues 221–241; the sequence is VLMTVIRWTSGIALVLFNLWV. Topologically, residues 242 to 274 are lumenal; it reads KLDAHRVVKDYAWYWGDFFYLIDQELTFDGVFE. Residues 275–295 form a helical membrane-spanning segment; it reads MAPHPMYSVGYAGYYGISLMA. Over 296–297 the chain is Cytoplasmic; that stretch reads AS. A helical transmembrane segment spans residues 298-318; the sequence is YKVLFISIIAHAAQFAFLVLV. Residues 319–394 are Lumenal-facing; it reads ENPHIDKTYN…LDLHRITDTS (76 aa). Residues 326 to 368 form a disordered region; sequence TYNPPPPRKRTITEHDAASQRSQSPDTPNAPSVSEENVPNATT. Positions 344-368 are enriched in polar residues; the sequence is SQRSQSPDTPNAPSVSEENVPNATT. The chain crosses the membrane as a helical span at residues 395-415; sequence SILVQFLMFSLTVLTPSTPWY. Gln416 is a topological domain (cytoplasmic). The chain crosses the membrane as a helical span at residues 417 to 437; sequence FLFVANAAIWRLWYSVGIGYL. Residues 438–470 are Lumenal-facing; that stretch reads LNRQSNCKSWTRHFVKYGETPHEAWNQWKGTYH. The chain crosses the membrane as a helical span at residues 471–491; sequence LSMVMCYASFISAVWKMYTLP. At 492–503 the chain is on the cytoplasmic side; the sequence is SNWGYGLAILRH. The chain crosses the membrane as a helical span at residues 504-524; sequence VLGAGLISLQIWTSVSIYESL. The Lumenal portion of the chain corresponds to 525–559; the sequence is GEFGWFYGDFFFDESPKLTYNGIYRFLNNPERVLG. The chain crosses the membrane as a helical span at residues 560–580; that stretch reads LAGVWGAVLITASGTVAFLAF. Topologically, residues 581 to 965 are cytoplasmic; that stretch reads LSHILSLGFI…GATTPTESKE (385 aa).

It belongs to the class VI-like SAM-binding methyltransferase superfamily. CHO2 family.

Its subcellular location is the endoplasmic reticulum membrane. It catalyses the reaction a 1,2-diacyl-sn-glycero-3-phosphoethanolamine + S-adenosyl-L-methionine = a 1,2-diacyl-sn-glycero-3-phospho-N-methylethanolamine + S-adenosyl-L-homocysteine + H(+). It functions in the pathway phospholipid metabolism; phosphatidylcholine biosynthesis. Catalyzes the first step of the methylation pathway of phosphatidylcholine biosynthesis, the SAM-dependent methylation of phosphatidylethanolamine (PE) to phosphatidylmonomethylethanolamine (PMME). This is Phosphatidylethanolamine N-methyltransferase from Emericella nidulans (strain FGSC A4 / ATCC 38163 / CBS 112.46 / NRRL 194 / M139) (Aspergillus nidulans).